The following is a 213-amino-acid chain: Orotate phosphoribosyltransferase (213 aa).

Lysine 26 provides a ligand contact to 5-phospho-alpha-D-ribose 1-diphosphate. Phenylalanine 34–phenylalanine 35 contributes to the orotate binding site. 5-phospho-alpha-D-ribose 1-diphosphate is bound by residues tyrosine 72–lysine 73, arginine 99, lysine 100, lysine 103, histidine 105, and aspartate 124–alanine 132. Positions 128 and 156 each coordinate orotate.

It belongs to the purine/pyrimidine phosphoribosyltransferase family. PyrE subfamily. Homodimer. Mg(2+) is required as a cofactor.

The catalysed reaction is orotidine 5'-phosphate + diphosphate = orotate + 5-phospho-alpha-D-ribose 1-diphosphate. The protein operates within pyrimidine metabolism; UMP biosynthesis via de novo pathway; UMP from orotate: step 1/2. Its function is as follows. Catalyzes the transfer of a ribosyl phosphate group from 5-phosphoribose 1-diphosphate to orotate, leading to the formation of orotidine monophosphate (OMP). In Vibrio cholerae serotype O1 (strain ATCC 39315 / El Tor Inaba N16961), this protein is Orotate phosphoribosyltransferase.